The sequence spans 227 residues: Ribonuclease HII (227 aa).

Positions 1–210 (MKLAGIDEAG…LKKIEEKLAK (210 aa)) constitute an RNase H type-2 domain. D7, E8, and D105 together coordinate a divalent metal cation.

The protein belongs to the RNase HII family. Mn(2+) serves as cofactor. The cofactor is Mg(2+).

It is found in the cytoplasm. The catalysed reaction is Endonucleolytic cleavage to 5'-phosphomonoester.. Its function is as follows. Endonuclease that specifically degrades the RNA of RNA-DNA hybrids. In Thermococcus onnurineus (strain NA1), this protein is Ribonuclease HII.